The chain runs to 137 residues: Protein PsiE homolog (137 aa).

4 helical membrane-spanning segments follow: residues 13-35 (ILLR…AFLI), 55-77 (YYMT…IVKY), 84-103 (FPLR…FIIV), and 107-129 (SATS…FLAN).

The protein belongs to the PsiE family.

It is found in the cell membrane. This Listeria monocytogenes serotype 4b (strain F2365) protein is Protein PsiE homolog.